A 789-amino-acid chain; its full sequence is Bifunctional purine biosynthetic protein PUR2,5 (789 aa).

The interval 1 to 428 (MEKINVLVVG…NRTDIAHRAF (428 aa)) is GARS. The 208-residue stretch at 114–321 (KDFMKKHNIP…LLELMLATVE (208 aa)) folds into the ATP-grasp domain. 140 to 201 (IANSSHNLVI…EEFLEGDELS (62 aa)) provides a ligand contact to ATP. Mg(2+) contacts are provided by E291 and N293. The AIRS stretch occupies residues 438–773 (LTYEDAGVSV…TVYTIGKLVE (336 aa)).

This sequence in the N-terminal section; belongs to the GARS family. In the C-terminal section; belongs to the AIR synthase family. Mg(2+) serves as cofactor. Requires Mn(2+) as cofactor.

It is found in the cytoplasm. It localises to the cytosol. It catalyses the reaction 2-formamido-N(1)-(5-O-phospho-beta-D-ribosyl)acetamidine + ATP = 5-amino-1-(5-phospho-beta-D-ribosyl)imidazole + ADP + phosphate + H(+). The enzyme catalyses 5-phospho-beta-D-ribosylamine + glycine + ATP = N(1)-(5-phospho-beta-D-ribosyl)glycinamide + ADP + phosphate + H(+). It participates in purine metabolism; IMP biosynthesis via de novo pathway; 5-amino-1-(5-phospho-D-ribosyl)imidazole from N(2)-formyl-N(1)-(5-phospho-D-ribosyl)glycinamide: step 2/2. The protein operates within purine metabolism; IMP biosynthesis via de novo pathway; N(1)-(5-phospho-D-ribosyl)glycinamide from 5-phospho-alpha-D-ribose 1-diphosphate: step 2/2. Functionally, catalyzes the second and fifth step in the 'de novo' purine biosynthesis pathway; contains phosphoribosylamine--glycine ligase (GARS) and phosphoribosylformylglycinamidine cyclo-ligase (AIRS) activities. This is Bifunctional purine biosynthetic protein PUR2,5 from Pichia angusta (Yeast).